The chain runs to 253 residues: 5-oxoprolinase subunit A (253 aa).

The protein belongs to the LamB/PxpA family. Forms a complex composed of PxpA, PxpB and PxpC.

The enzyme catalyses 5-oxo-L-proline + ATP + 2 H2O = L-glutamate + ADP + phosphate + H(+). Catalyzes the cleavage of 5-oxoproline to form L-glutamate coupled to the hydrolysis of ATP to ADP and inorganic phosphate. The sequence is that of 5-oxoprolinase subunit A from Shouchella clausii (strain KSM-K16) (Alkalihalobacillus clausii).